We begin with the raw amino-acid sequence, 316 residues long: Porphobilinogen deaminase (316 aa).

C245 carries the S-(dipyrrolylmethanemethyl)cysteine modification.

The protein belongs to the HMBS family. Monomer. Dipyrromethane is required as a cofactor.

It carries out the reaction 4 porphobilinogen + H2O = hydroxymethylbilane + 4 NH4(+). Its pathway is porphyrin-containing compound metabolism; protoporphyrin-IX biosynthesis; coproporphyrinogen-III from 5-aminolevulinate: step 2/4. The protein operates within porphyrin-containing compound metabolism; chlorophyll biosynthesis. Functionally, tetrapolymerization of the monopyrrole PBG into the hydroxymethylbilane pre-uroporphyrinogen in several discrete steps. The protein is Porphobilinogen deaminase of Prochlorococcus marinus (strain MIT 9515).